We begin with the raw amino-acid sequence, 137 residues long: Structural protein A137R (137 aa).

This sequence belongs to the asfivirus A137R family. As to quaternary structure, interacts with host TBK1.

It is found in the virion. The protein localises to the host cytoplasm. Functionally, plays a role in the inhibition of the host innate immune response. Mechanistically, promotes the autophagy-mediated lysosomal degradation of host TBK1 and affects IRF3 nuclear translocation to block type I IFN production. The protein is Structural protein A137R of Ornithodoros (relapsing fever ticks).